Here is a 245-residue protein sequence, read N- to C-terminus: 2,3-bisphosphoglycerate-dependent phosphoglycerate mutase (245 aa).

Residues 9–16 (RHGESEWN), 22–23 (TG), R61, 88–91 (ERHY), K99, 115–116 (RR), and 181–182 (GN) each bind substrate. H10 acts as the Tele-phosphohistidine intermediate in catalysis. Residue E88 is the Proton donor/acceptor of the active site.

This sequence belongs to the phosphoglycerate mutase family. BPG-dependent PGAM subfamily.

The enzyme catalyses (2R)-2-phosphoglycerate = (2R)-3-phosphoglycerate. It participates in carbohydrate degradation; glycolysis; pyruvate from D-glyceraldehyde 3-phosphate: step 3/5. Functionally, catalyzes the interconversion of 2-phosphoglycerate and 3-phosphoglycerate. The protein is 2,3-bisphosphoglycerate-dependent phosphoglycerate mutase of Nocardia farcinica (strain IFM 10152).